Consider the following 276-residue polypeptide: Undecaprenyl-diphosphatase 1 (276 aa).

A run of 7 helical transmembrane segments spans residues 4-24 (ILICKALILGVVEGLTEFLPV), 46-63 (TFDVVIQFGAILAVCWEY), 83-103 (FTLNVVIATIPAIALGLLFEK), 108-128 (VLFSPVPVAFALVVGGAIILW), 187-207 (VATEFSFFLAIPIIFGATLYE), 217-237 (VDSLGLFVLGAVAAFVSAFVC), and 252-272 (VFAWYRIAFGLFVLLVGYSGW).

This sequence belongs to the UppP family.

Its subcellular location is the cell inner membrane. The catalysed reaction is di-trans,octa-cis-undecaprenyl diphosphate + H2O = di-trans,octa-cis-undecaprenyl phosphate + phosphate + H(+). Catalyzes the dephosphorylation of undecaprenyl diphosphate (UPP). Confers resistance to bacitracin. This Burkholderia lata (strain ATCC 17760 / DSM 23089 / LMG 22485 / NCIMB 9086 / R18194 / 383) protein is Undecaprenyl-diphosphatase 1.